Reading from the N-terminus, the 173-residue chain is Peptide methionine sulfoxide reductase MsrA (173 aa).

Cys-10 is a catalytic residue.

It belongs to the MsrA Met sulfoxide reductase family.

The catalysed reaction is L-methionyl-[protein] + [thioredoxin]-disulfide + H2O = L-methionyl-(S)-S-oxide-[protein] + [thioredoxin]-dithiol. The enzyme catalyses [thioredoxin]-disulfide + L-methionine + H2O = L-methionine (S)-S-oxide + [thioredoxin]-dithiol. Functionally, has an important function as a repair enzyme for proteins that have been inactivated by oxidation. Catalyzes the reversible oxidation-reduction of methionine sulfoxide in proteins to methionine. This is Peptide methionine sulfoxide reductase MsrA from Psychrobacter arcticus (strain DSM 17307 / VKM B-2377 / 273-4).